Reading from the N-terminus, the 75-residue chain is Large ribosomal subunit protein bL31 (75 aa).

It belongs to the bacterial ribosomal protein bL31 family. Type A subfamily. Part of the 50S ribosomal subunit.

In terms of biological role, binds the 23S rRNA. The chain is Large ribosomal subunit protein bL31 from Bradyrhizobium diazoefficiens (strain JCM 10833 / BCRC 13528 / IAM 13628 / NBRC 14792 / USDA 110).